The chain runs to 620 residues: Schwann cell myelin protein (620 aa).

Residues Met-1–Ser-17 form the signal peptide. Topologically, residues Ala-18–Pro-516 are extracellular. Residues Met-28–Leu-106 form the Ig-like V-type domain. Intrachain disulfides connect Cys-35–Cys-164, Cys-40–Cys-99, and Cys-158–Cys-216. An N-acetylneuraminate-binding site is contributed by Arg-117. Ig-like C2-type domains are found at residues Gly-151–Leu-233, Pro-239–Ala-322, Pro-325–Ser-407, and Val-414–Gly-495. Asn-222 carries N-linked (GlcNAc...) asparagine glycosylation. Cys-260 and Cys-304 are disulfide-bonded. Residues Asn-314 and Asn-331 are each glycosylated (N-linked (GlcNAc...) asparagine). A disulfide bridge connects residues Cys-346 and Cys-391. Asn-405 is a glycosylation site (N-linked (GlcNAc...) asparagine). Intrachain disulfides connect Cys-420–Cys-429 and Cys-431–Cys-488. The N-linked (GlcNAc...) asparagine glycan is linked to Asn-449. A helical transmembrane segment spans residues Val-517–Ser-536. Residues Arg-537–Lys-620 are Cytoplasmic-facing. Disordered regions lie at residues Lys-539–Leu-562 and Val-583–Lys-620.

It belongs to the immunoglobulin superfamily. SIGLEC (sialic acid binding Ig-like lectin) family. In terms of tissue distribution, exclusively expressed by myelinating and nonmyelinating Schwann cells and oligodendrocytes.

The protein resides in the membrane. The protein is Schwann cell myelin protein (SMP) of Coturnix japonica (Japanese quail).